We begin with the raw amino-acid sequence, 382 residues long: Pyrimidine monooxygenase RutA (382 aa).

Residues 68–69 (IK), N134, E143, 159–160 (RY), and S209 contribute to the FMN site.

The protein belongs to the NtaA/SnaA/DszA monooxygenase family. RutA subfamily.

The enzyme catalyses uracil + FMNH2 + NADH + O2 = (Z)-3-ureidoacrylate + FMN + NAD(+) + H2O + H(+). It carries out the reaction thymine + FMNH2 + NADH + O2 = (Z)-2-methylureidoacrylate + FMN + NAD(+) + H2O + H(+). Its function is as follows. Catalyzes the pyrimidine ring opening between N-3 and C-4 by an unusual flavin hydroperoxide-catalyzed mechanism, adding oxygen atoms in the process to yield ureidoacrylate peracid, that immediately reacts with FMN forming ureidoacrylate and FMN-N(5)-oxide. The FMN-N(5)-oxide reacts spontaneously with NADH to produce FMN. Requires the flavin reductase RutF to regenerate FMN in vivo. This chain is Pyrimidine monooxygenase RutA, found in Escherichia coli (strain SE11).